Consider the following 32-residue polypeptide: Phallacidin proprotein (32 aa).

Positions methionine 1–proline 10 are excised as a propeptide. Positions alanine 11–proline 17 form a cross-link, cyclopeptide (Ala-Pro). A cross-link (2'-cysteinyl-6'-hydroxytryptophan sulfoxide (Trp-Cys)) is located at residues tryptophan 12–cysteine 16. Positions cysteine 18 to lysine 32 are excised as a propeptide.

The protein belongs to the MSDIN fungal toxin family. Post-translationally, processed by the macrocyclase-peptidase enzyme POPB to yield a toxic cyclic heptapeptide. POPB first removes 10 residues from the N-terminus. Conformational trapping of the remaining peptide forces the enzyme to release this intermediate rather than proceed to macrocyclization. The enzyme rebinds the remaining peptide in a different conformation and catalyzes macrocyclization of the N-terminal 7 residues.

Its function is as follows. Major toxin that belongs to the bicyclic heptapeptides called phallotoxins. Although structurally related to amatoxins, phallotoxins have a different mode of action, which is the stabilization of F-actin. Phallotoxins are poisonous when administered parenterally, but not orally because of poor absorption. The sequence is that of Phallacidin proprotein from Amanita pallidorosea.